A 131-amino-acid polypeptide reads, in one-letter code: Large ribosomal subunit protein bL19 (131 aa).

It belongs to the bacterial ribosomal protein bL19 family.

This protein is located at the 30S-50S ribosomal subunit interface and may play a role in the structure and function of the aminoacyl-tRNA binding site. The sequence is that of Large ribosomal subunit protein bL19 from Rhodopseudomonas palustris (strain HaA2).